Consider the following 158-residue polypeptide: 2-C-methyl-D-erythritol 2,4-cyclodiphosphate synthase (158 aa).

Residues aspartate 8 and histidine 10 each contribute to the a divalent metal cation site. Residues 8-10 (DAH) and 34-35 (HS) contribute to the 4-CDP-2-C-methyl-D-erythritol 2-phosphate site. Histidine 42 serves as a coordination point for a divalent metal cation. 4-CDP-2-C-methyl-D-erythritol 2-phosphate contacts are provided by residues 56–58 (DIG), 132–135 (TTTE), and arginine 142.

The protein belongs to the IspF family. As to quaternary structure, homotrimer. A divalent metal cation serves as cofactor.

The enzyme catalyses 4-CDP-2-C-methyl-D-erythritol 2-phosphate = 2-C-methyl-D-erythritol 2,4-cyclic diphosphate + CMP. It functions in the pathway isoprenoid biosynthesis; isopentenyl diphosphate biosynthesis via DXP pathway; isopentenyl diphosphate from 1-deoxy-D-xylulose 5-phosphate: step 4/6. Involved in the biosynthesis of isopentenyl diphosphate (IPP) and dimethylallyl diphosphate (DMAPP), two major building blocks of isoprenoid compounds. Catalyzes the conversion of 4-diphosphocytidyl-2-C-methyl-D-erythritol 2-phosphate (CDP-ME2P) to 2-C-methyl-D-erythritol 2,4-cyclodiphosphate (ME-CPP) with a corresponding release of cytidine 5-monophosphate (CMP). This chain is 2-C-methyl-D-erythritol 2,4-cyclodiphosphate synthase, found in Nitrosococcus oceani (strain ATCC 19707 / BCRC 17464 / JCM 30415 / NCIMB 11848 / C-107).